Consider the following 441-residue polypeptide: Vacuolar cation/proton exchanger 5 (441 aa).

Gly2 carries N-myristoyl glycine lipidation. Over 2-69 the chain is Cytoplasmic; sequence GCCKVPALIQ…PNNSVLQSFK (68 aa). 2 S-palmitoyl cysteine lipidation sites follow: Cys3 and Cys4. The chain crosses the membrane as a helical span at residues 70–90; the sequence is IVILSNKLNLLLPFGPLAILL. The Extracellular segment spans residues 91 to 97; that stretch reads HYLTDNK. The chain crosses the membrane as a helical span at residues 98-118; it reads GWIFLLSLVGITPLAERLGYA. The Cytoplasmic segment spans residues 119-129; sequence TEQLACYTGST. A helical membrane pass occupies residues 130 to 150; sequence VGGLLNATFGNVTELIISIFA. The tract at residues 139–174 is cation selection; that stretch reads GNVTELIISIFALKSGMIRVVQLTLLGSILSNMLLV. Topologically, residues 151–165 are extracellular; that stretch reads LKSGMIRVVQLTLLG. The helical transmembrane segment at 166–186 threads the bilayer; sequence SILSNMLLVLGCAFFCGGLVF. At 187–197 the chain is on the cytoplasmic side; the sequence is SQKEQVFDKGN. The chain crosses the membrane as a helical span at residues 198–218; it reads AVVNSGLLLMAVMGLLFPAVL. Residues 219 to 231 are Extracellular-facing; it reads HYTHSEVHAGSSE. A helical membrane pass occupies residues 232–252; it reads LALSRFSSCIMLVAYAAYLFF. Topologically, residues 253 to 286 are cytoplasmic; sequence QLKSQPSSYTPLTEETNQNEETSDDDEDPEISKW. The helical transmembrane segment at 287 to 307 threads the bilayer; sequence EAIIWLSILTAWVSLLSGYLV. At 308–311 the chain is on the extracellular side; that stretch reads DAIE. A helical membrane pass occupies residues 312-332; it reads GASVSWKIPISFISVILLPIV. Over 333-354 the chain is Cytoplasmic; sequence GNAAEHAGAIMFAMKDKLDLSL. The interval 333-368 is cation selection; that stretch reads GNAAEHAGAIMFAMKDKLDLSLGVAIGSSIQISMFA. Residues 355 to 375 traverse the membrane as a helical segment; sequence GVAIGSSIQISMFAVPFCVVI. Over 376–384 the chain is Extracellular; sequence GWMMGAQMD. A helical membrane pass occupies residues 385–405; sequence LNFQLFETATLFITVIVVAFF. The Cytoplasmic portion of the chain corresponds to 406–412; it reads LQEGTSN. Residues 413-433 traverse the membrane as a helical segment; it reads YFKGLMLILCYLIVAASFFVH. Over 434–441 the chain is Extracellular; sequence EDPHQDDI.

It belongs to the Ca(2+):cation antiporter (CaCA) (TC 2.A.19) family. Cation/proton exchanger (CAX) subfamily.

It localises to the vacuole membrane. Vacuolar cation/proton exchanger (CAX). Translocates Ca(2+) and other metal ions into vacuoles using the proton gradient formed by H(+)-ATPase and H(+)-pyrophosphatase. This Arabidopsis thaliana (Mouse-ear cress) protein is Vacuolar cation/proton exchanger 5 (CAX5).